The primary structure comprises 513 residues: Maturase K (513 aa).

The protein belongs to the intron maturase 2 family. MatK subfamily.

The protein resides in the plastid. It localises to the chloroplast. In terms of biological role, usually encoded in the trnK tRNA gene intron. Probably assists in splicing its own and other chloroplast group II introns. The chain is Maturase K from Sporobolus michauxianus (Prairie cordgrass).